We begin with the raw amino-acid sequence, 136 residues long: Nuclear receptor 2C2-associated protein (136 aa).

The protein belongs to the NR2C2AP family.

The protein resides in the nucleus. In terms of biological role, may act as a repressor of nr2c2-mediated transactivation by suppressing the binding between nr2c2 and its response element in target genes. This Xenopus tropicalis (Western clawed frog) protein is Nuclear receptor 2C2-associated protein (nr2c2ap).